The following is a 310-amino-acid chain: Vomeronasal type-1 receptor 47 (310 aa).

At 1-16 the chain is on the extracellular side; the sequence is MNENSRLHTHSNIRNT. A helical membrane pass occupies residues 17-37; it reads FFSEIGIGISGNSFLLLFHII. The Cytoplasmic portion of the chain corresponds to 38–49; the sequence is KFFRGHRPRLTD. A helical membrane pass occupies residues 50–70; sequence LPIGLLSLIHLLMLLVAAVIA. The Extracellular portion of the chain corresponds to 71 to 91; that stretch reads TDIFISWRGWNDIICKFLVYL. A disulfide bond links C85 and C172. A helical membrane pass occupies residues 92-114; sequence YRSLRGLSLCTTSMLSVLQAIIL. Residues 115-131 lie on the Cytoplasmic side of the membrane; the sequence is SPRSYCLAKFKRKSSHN. The chain crosses the membrane as a helical span at residues 132–152; that stretch reads ISCAIIFLSVLYMSISSHLFI. Residues 153 to 193 are Extracellular-facing; the sequence is SITATLNLTMNNFLYVSQSCSLLPLSYLMQSMYSTLLVLRE. The N-linked (GlcNAc...) asparagine glycan is linked to N159. Residues 194–214 traverse the membrane as a helical segment; sequence VFLIGLMVLSTSYMVALLCMH. The Cytoplasmic segment spans residues 215–238; the sequence is RKQAQNLQGTSLSLKTAPEQRATQ. The helical transmembrane segment at 239–259 threads the bilayer; sequence TILMLMTFFVLMSIFDSIVSS. Residues 260 to 269 are Extracellular-facing; it reads SRAMFLDDST. A helical membrane pass occupies residues 270–290; sequence CYSIYIFVMHIYATVSPFVFM. Residues 291-310 lie on the Cytoplasmic side of the membrane; sequence STEKHLVNFFRSMCEWIINM.

It belongs to the G-protein coupled receptor 1 family.

The protein localises to the cell membrane. Its function is as follows. Putative pheromone receptor implicated in the regulation of social and reproductive behavior. The polypeptide is Vomeronasal type-1 receptor 47 (Vmn1r47) (Mus musculus (Mouse)).